A 511-amino-acid chain; its full sequence is Probable cytosol aminopeptidase (511 aa).

Lys-255 and Asp-260 together coordinate Mn(2+). Residue Lys-267 is part of the active site. The Mn(2+) site is built by Asp-278, Asp-337, and Glu-339. Residue Arg-341 is part of the active site. The segment at 485 to 511 (GAAQAVSPKKAARKEPGAAARKARSAQ) is disordered.

It belongs to the peptidase M17 family. Mn(2+) serves as cofactor.

The protein resides in the cytoplasm. It catalyses the reaction Release of an N-terminal amino acid, Xaa-|-Yaa-, in which Xaa is preferably Leu, but may be other amino acids including Pro although not Arg or Lys, and Yaa may be Pro. Amino acid amides and methyl esters are also readily hydrolyzed, but rates on arylamides are exceedingly low.. It carries out the reaction Release of an N-terminal amino acid, preferentially leucine, but not glutamic or aspartic acids.. Its function is as follows. Presumably involved in the processing and regular turnover of intracellular proteins. Catalyzes the removal of unsubstituted N-terminal amino acids from various peptides. The protein is Probable cytosol aminopeptidase of Variovorax paradoxus (strain S110).